The primary structure comprises 64 residues: Large ribosomal subunit protein bL32 (64 aa).

The segment at 1–23 (MAVQKSRVTPSRRGQRRSHDALA) is disordered.

The protein belongs to the bacterial ribosomal protein bL32 family.

The polypeptide is Large ribosomal subunit protein bL32 (Xylella fastidiosa (strain M23)).